Here is a 421-residue protein sequence, read N- to C-terminus: Testin (421 aa).

The region spanning 92–199 is the PET domain; that stretch reads MILTNPVAAK…GDVKLPCEMD (108 aa). Residues 133–164 are disordered; the sequence is EKQPVAGSEGAQYRKKQLAKQLPAHDQDPSKC. Basic and acidic residues predominate over residues 155–164; that stretch reads PAHDQDPSKC. LIM zinc-binding domains are found at residues 234–297, 299–359, and 362–421; these read YSCY…CDSE, PRCA…NHAV, and QGCH…KMMS.

Belongs to the prickle / espinas / testin family. In terms of assembly, interacts via LIM domain 1 with ZYX. Interacts (via LIM domain 3) with ENAH and VASP. Interacts with ALKBH4, talin, actin, alpha-actinin, GRIP1 and PXN. Interacts (via LIM domain 2) with ACTL7A (via N-terminus). Heterodimer with ACTL7A; the heterodimer interacts with ENAH to form a heterotrimer.

It localises to the cytoplasm. The protein localises to the cell junction. It is found in the focal adhesion. In terms of biological role, scaffold protein that may play a role in cell adhesion, cell spreading and in the reorganization of the actin cytoskeleton. Plays a role in the regulation of cell proliferation. May act as a tumor suppressor. In Ateles geoffroyi (Black-handed spider monkey), this protein is Testin (TES).